We begin with the raw amino-acid sequence, 166 residues long: Mitochondrial fission process protein 1 (166 aa).

Helical transmembrane passes span 33–53 (SLVK…YVAA), 78–98 (AIAA…IPGF), and 125–145 (TVTC…DSFV).

This sequence belongs to the MTFP1 family.

It is found in the mitochondrion inner membrane. Its function is as follows. Involved in the mitochondrial division probably by regulating membrane fission. Loss-of-function leads to apoptosis. The chain is Mitochondrial fission process protein 1 (mtp-18) from Caenorhabditis elegans.